The sequence spans 385 residues: dTDP-4-dehydro-2,3,6-trideoxy-D-glucose 4-aminotransferase (385 aa).

Lys182 is subject to N6-(pyridoxal phosphate)lysine.

This sequence belongs to the DegT/DnrJ/EryC1 family. In terms of assembly, homodimer. Pyridoxal 5'-phosphate serves as cofactor.

It catalyses the reaction dTDP-4-amino-2,3,4,6-tetradeoxy-alpha-D-erythro-hexopyranose + 2-oxoglutarate = dTDP-4-dehydro-2,3,6-trideoxy-alpha-D-hexopyranose + L-glutamate. Its function is as follows. Involved in the biosynthesis of forosamine ((4-dimethylamino)-2,3,4,6-tetradeoxy-alpha-D-threo-hexopyranose), a highly deoxygenated sugar component of several bioactive natural products such as the insecticidal spinosyns A and D. In the presence of pyridoxal 5'-phosphate (PLP) and alpha-ketoglutarate, catalyzes the C-4 transamination of dTDP-4-keto-2,3,6-trideoxy-alpha-D-glucose to yield dTDP-4-amino-2,3,4,6-tetradeoxy-alpha-D-glucose. It can also use pyruvate, but less efficiently than alpha-ketoglutarate. Also able to catalyze the C-4 transamination of dTDP-4-keto-2,6-dideoxy-alpha-D-glucose to yield dTDP-4-amino-2,4,6-trideoxy-D-glucose. This chain is dTDP-4-dehydro-2,3,6-trideoxy-D-glucose 4-aminotransferase, found in Saccharopolyspora spinosa.